The chain runs to 471 residues: PTS system mannitol-specific EIICB component (471 aa).

The Cytoplasmic portion of the chain corresponds to 1–29 (MTHTSENQAGFRVKIQRFGSYLSGMIMPN). The 325-residue stretch at 18–342 (FGSYLSGMIM…FFVASIFLKS (325 aa)) folds into the PTS EIIC type-2 domain. Residues 30–51 (IGAFIAWGIITALFIPTGWLPN) traverse the membrane as a helical segment. The Extracellular portion of the chain corresponds to 52–55 (ETFA). Residues 56-76 (KLVGPMITYLLPLLIGYTGGK) traverse the membrane as a helical segment. Residues 77-139 (MIYDVRGGVV…QGFEMLVNNF (63 aa)) lie on the Cytoplasmic side of the membrane. The helical transmembrane segment at 140–161 (SAGIIGGLLTLAAFKGVGPVVS) threads the bilayer. At 162-170 (AISKTLAAG) the chain is on the extracellular side. The chain crosses the membrane as a helical span at residues 171 to 191 (VEKIVDLHLLPLANIFIEPGK). The Cytoplasmic segment spans residues 192–278 (VLFLNNAINH…VLMRPILILA (87 aa)). The chain crosses the membrane as a helical span at residues 279–298 (AIAGGVSGVLTFTIFDAGLV). Residues 299–318 (AVPSPGSIFALLAMTPKGNY) lie on the Extracellular side of the membrane. Residues 319-340 (LGVLAGVLVATAVSFFVASIFL) traverse the membrane as a helical segment. At 341 to 471 (KSAKNNEEDI…YDELIEMLKK (131 aa)) the chain is on the cytoplasmic side. In terms of domain architecture, PTS EIIB type-2 spans 383–471 (KKIVFACDAG…YDELIEMLKK (89 aa)). The Phosphocysteine intermediate; for EIIB activity role is filled by C389. Position 389 is a phosphocysteine; by EIIA (C389).

In terms of assembly, homodimer.

The protein resides in the cell membrane. The catalysed reaction is D-mannitol(out) + N(pros)-phospho-L-histidyl-[protein] = D-mannitol 1-phosphate(in) + L-histidyl-[protein]. The phosphoenolpyruvate-dependent sugar phosphotransferase system (sugar PTS), a major carbohydrate active transport system, catalyzes the phosphorylation of incoming sugar substrates concomitantly with their translocation across the cell membrane. The enzyme II CmtAB PTS system is involved in D-mannitol transport. The sequence is that of PTS system mannitol-specific EIICB component from Geobacillus stearothermophilus (Bacillus stearothermophilus).